A 678-amino-acid polypeptide reads, in one-letter code: PTS system glucose-specific EIICBA component (678 aa).

The region spanning 3-414 (KKLFGQLQRI…FKYKTPGRED (412 aa)) is the PTS EIIC type-1 domain. 11 helical membrane-spanning segments follow: residues 16-36 (LMLP…GTAM), 63-83 (AGGI…AIGL), 89-109 (VAAI…GAFL), 126-146 (VLGI…GALA), 170-190 (FVPI…AWIW), 211-231 (LAVF…LHHI), 273-293 (FMQG…LAIY), 303-323 (VVAG…ITEP), 329-349 (LFVA…SFLI), 355-375 (VHLG…GVLP), and 382-402 (LVIP…RFLI). Residues 425-506 (SELPFNVLKA…SLIMKGEITK (82 aa)) form the PTS EIIB type-1 domain. The Phosphocysteine intermediate; for EIIB activity role is filled by Cys447. In terms of domain architecture, PTS EIIA type-1 spans 547 to 651 (DQVFAQKMMG…STVTPLIITN (105 aa)). The Tele-phosphohistidine intermediate; for EIIA activity role is filled by His599.

Its subcellular location is the cell membrane. It catalyses the reaction N(pros)-phospho-L-histidyl-[protein] + D-glucose(out) = D-glucose 6-phosphate(in) + L-histidyl-[protein]. The phosphoenolpyruvate-dependent sugar phosphotransferase system (sugar PTS), a major carbohydrate active transport system, catalyzes the phosphorylation of incoming sugar substrates concomitantly with their translocation across the cell membrane. This system is involved in glucose transport. In Staphylococcus saprophyticus subsp. saprophyticus (strain ATCC 15305 / DSM 20229 / NCIMB 8711 / NCTC 7292 / S-41), this protein is PTS system glucose-specific EIICBA component (ptsG).